We begin with the raw amino-acid sequence, 310 residues long: Malate dehydrogenase (310 aa).

NAD(+)-binding positions include 7 to 12 (GAGNVG) and aspartate 32. Substrate is bound by residues arginine 81 and arginine 87. Residues asparagine 94 and 117–119 (VSN) contribute to the NAD(+) site. Substrate contacts are provided by asparagine 119 and arginine 150. The Proton acceptor role is filled by histidine 174.

The protein belongs to the LDH/MDH superfamily. MDH type 3 family.

It carries out the reaction (S)-malate + NAD(+) = oxaloacetate + NADH + H(+). Its function is as follows. Catalyzes the reversible oxidation of malate to oxaloacetate. This is Malate dehydrogenase from Pelodictyon phaeoclathratiforme (strain DSM 5477 / BU-1).